The primary structure comprises 231 residues: Potassium/proton antiporter CemA (231 aa).

Transmembrane regions (helical) follow at residues 7–27, 104–124, 154–174, and 189–209; these read FIPLLCLTSIVFLPWCISFTF, IHTILHFCTNIICFLILSVYS, ILFLIEFCVGYHSTGGWELMI, and IISFLVSILPAILDTIFKYWI.

This sequence belongs to the CemA family.

The protein resides in the plastid. The protein localises to the chloroplast inner membrane. It carries out the reaction K(+)(in) + H(+)(out) = K(+)(out) + H(+)(in). Contributes to K(+)/H(+) antiport activity by supporting proton efflux to control proton extrusion and homeostasis in chloroplasts in a light-dependent manner to modulate photosynthesis. Prevents excessive induction of non-photochemical quenching (NPQ) under continuous-light conditions. Indirectly promotes efficient inorganic carbon uptake into chloroplasts. This chain is Potassium/proton antiporter CemA, found in Pisum sativum (Garden pea).